The primary structure comprises 494 residues: Cobyric acid synthase (494 aa).

The 195-residue stretch at 249–443 (EINVTILRLP…LHGIFDNGAW (195 aa)) folds into the GATase cobBQ-type domain. Catalysis depends on cysteine 330, which acts as the Nucleophile. Histidine 435 is an active-site residue.

Belongs to the CobB/CobQ family. CobQ subfamily.

Its pathway is cofactor biosynthesis; adenosylcobalamin biosynthesis. Catalyzes amidations at positions B, D, E, and G on adenosylcobyrinic A,C-diamide. NH(2) groups are provided by glutamine, and one molecule of ATP is hydrogenolyzed for each amidation. In Crocosphaera subtropica (strain ATCC 51142 / BH68) (Cyanothece sp. (strain ATCC 51142)), this protein is Cobyric acid synthase.